We begin with the raw amino-acid sequence, 238 residues long: Oil body-associated protein 1A (238 aa).

The protein belongs to the OBAP family. Expressed in seeds, but not in leaves or roots. Highest expression in scutellum. Detected in embryo axis and endosperm.

It localises to the lipid droplet. This chain is Oil body-associated protein 1A, found in Zea mays (Maize).